The chain runs to 395 residues: Aurora kinase A (395 aa).

The segment at 1-114 is disordered; it reads MDRCKENCVS…QASLQKTEDT (114 aa). 2 stretches are compositionally biased toward polar residues: residues 29–60 and 84–99; these read QIPSQNLGSASSGQAQRVLCPSNSQRVPSQAQ and RLNNPQKNEQPAASGN. A phosphoserine mark is found at S40 and S50. Residues 100-114 are compositionally biased toward basic and acidic residues; it reads DSEKEQASLQKTEDT. The Protein kinase domain occupies 124 to 374; the sequence is FDIGRPLGKG…LAEVLEHPWI (251 aa). Residues K134, K153, and 201 to 204 each bind ATP; that span reads LEYA. D247 acts as the Proton acceptor in catalysis. Residue K249 forms a Glycyl lysine isopeptide (Lys-Gly) (interchain with G-Cter in SUMO2) linkage. ATP contacts are provided by residues 251–252 and D265; that span reads EN. The activation segment stretch occupies residues 271-284; it reads HAPSSRRTTMCGTL. Residues T278 and T279 each carry the phosphothreonine modification. A Phosphoserine; by PKA and PAK modification is found at S333. Residues 376–385 are compositionally biased toward polar residues; sequence ANSSKPPTGH. The disordered stretch occupies residues 376–395; the sequence is ANSSKPPTGHTSKEPTSKSS. The span at 386–395 shows a compositional bias: basic and acidic residues; that stretch reads TSKEPTSKSS.

This sequence belongs to the protein kinase superfamily. Ser/Thr protein kinase family. Aurora subfamily. In terms of assembly, part of a complex composed of NEDD9, AURKA and CTTN; within the complex NEDD9 acts as a scaffold protein and is required for complex formation. Identified in a complex with AUNIP and NIN. Interacts with CPEB1, JTB, TACC1, TPX2, PPP2CA, as well as with the protein phosphatase type 1 (PP1) isoforms PPP1CA, PPP1CB and PPP1CC. Also interacts with its substrates ARHGEF2, BORA, KIF2A, PARD3, and p53/TP53. Interaction with BORA promotes phosphorylation of PLK1. Interacts with GADD45A, competing with its oligomerization. Interacts with FBXL7 and CIMAP3. Interacts (via C-terminus) with AUNIP (via C-terminus). Interacts with SIRT2. Interacts with FRY; this interaction facilitates AURKA-mediated PLK1 phosphorylation. Interacts with MYCN; interaction is phospho-independent and triggers AURKA activation; AURKA competes with FBXW7 for binding to unphosphorylated MYCN but not for binding to phosphorylated MYCN. Interacts with HNRNPU. Interacts with AAAS. Interacts with KLHL18 and CUL3. Interacts with FOXP1. Interacts with HDAC6; AURKA-mediated phosphorylation of HDAC6 promotes deacetylation of alpha-tubulin. Post-translationally, activated by phosphorylation at Thr-279; this brings about a change in the conformation of the activation segment. Phosphorylation at Thr-279 varies during the cell cycle and is highest during M phase. Autophosphorylated at Thr-279 upon TPX2 binding. Thr-279 can be phosphorylated by several kinases, including PAK and PKA. Protein phosphatase type 1 (PP1) binds AURKA and inhibits its activity by dephosphorylating Thr-279 during mitosis. Phosphorylation at Ser-333 decreases the kinase activity. PPP2CA controls degradation by dephosphorylating Ser-52 at the end of mitosis. Ubiquitinated by the anaphase-promoting complex (APC), leading to its degradation by the proteasome. Ubiquitinated by CHFR, leading to its degradation by the proteasome. Ubiquitinated by the E3 ubiquitin-protein ligase complex SCF(FBXL7) during mitosis, leading to its degradation by the proteasome. As to expression, detected in embryonic neurons in dorsal root ganglia and brain cortex (at protein level). Highly expressed in testis, in about one third of the seminiferous tubules. Expression is restricted to specific spermatocytes nearing completion of prophase, with levels falling off on transition to elongated spermatids. Highly expressed in the ovary, expression in the oocyte starts around the transition to large growing follicle. Abundant expression is seen in the proliferating granulosa and thecal cells of the growing follicle, and in the young corpus luteum. Very weakly expressed in spleen and intestine.

The protein resides in the cytoplasm. It is found in the cytoskeleton. It localises to the microtubule organizing center. The protein localises to the centrosome. Its subcellular location is the spindle pole. The protein resides in the centriole. It is found in the cell projection. It localises to the neuron projection. The protein localises to the cilium. Its subcellular location is the cilium basal body. The protein resides in the basolateral cell membrane. It carries out the reaction L-seryl-[protein] + ATP = O-phospho-L-seryl-[protein] + ADP + H(+). The catalysed reaction is L-threonyl-[protein] + ATP = O-phospho-L-threonyl-[protein] + ADP + H(+). Its activity is regulated as follows. Activation of CDK1, appears to be an upstream event of AURKA activation. Phosphatase inhibitor-2 (PPP1R2) and TPX2 act also as activators. Inactivated by the G2 checkpoint. Inhibited by GADD45A and p53/TP53, and through dephosphorylation by protein phosphatase type 1 (PP1). MLN8054 is also a potent and selective inhibitor. Activated during the early phase of cilia disassembly in the presence of CIMAP3. Inhibited by the small molecule inhibitor VX-680. Mitotic serine/threonine kinase that contributes to the regulation of cell cycle progression. Associates with the centrosome and the spindle microtubules during mitosis and plays a critical role in various mitotic events including the establishment of mitotic spindle, centrosome duplication, centrosome separation as well as maturation, chromosomal alignment, spindle assembly checkpoint, and cytokinesis. Required for normal spindle positioning during mitosis and for the localization of NUMA1 and DCTN1 to the cell cortex during metaphase. Required for initial activation of CDK1 at centrosomes. Phosphorylates numerous target proteins, including ARHGEF2, BORA, BRCA1, CDC25B, DLGP5, HDAC6, KIF2A, LATS2, NDEL1, PARD3, PPP1R2, PLK1, RASSF1, TACC3, p53/TP53 and TPX2. Phosphorylates MCRS1 which is required for MCRS1-mediated kinetochore fiber assembly and mitotic progression. Regulates KIF2A tubulin depolymerase activity. Required for normal axon formation. Plays a role in microtubule remodeling during neurite extension. Important for microtubule formation and/or stabilization. Also acts as a key regulatory component of the p53/TP53 pathway, and particularly the checkpoint-response pathways critical for oncogenic transformation of cells, by phosphorylating and destabilizing p53/TP53. Phosphorylates its own inhibitors, the protein phosphatase type 1 (PP1) isoforms, to inhibit their activity. Inhibits cilia outgrowth. Required for cilia disassembly via phosphorylation of HDAC6 and subsequent deacetylation of alpha-tubulin. Regulates protein levels of the anti-apoptosis protein BIRC5 by suppressing the expression of the SCF(FBXL7) E3 ubiquitin-protein ligase substrate adapter FBXL7 through the phosphorylation of the transcription factor FOXP1. The protein is Aurora kinase A (Aurka) of Mus musculus (Mouse).